Reading from the N-terminus, the 442-residue chain is MYFRFGKGLQIQLRHSSKAVRSQLRWNSTTKLIKPIASTQHPFLVKPVTPHESYVSCTIFNEKGDVTAVSHKFPKWEFLQKYGLYPRDLRKIDSSTIDVIPSFVIKPKCILVNVLHIKAMIQKDKVFVFDTTNPDAAIKLGVLMYDLESKLSQRNINYQGKSVSYQENYEHRALESILINVMTCLETEYKYHHSVCGMILNDLENQIDRDKLRDLLIKSKTLTAFAQKSVLLRDLLDELLESDEDLAGMYLSEKKHPDADDHSDLEMLLETYYKQCDEYVQQSESLIQDIKSTEEIVNIILDANRNSLLLFELKVTVYTLGFTVATLVPAFYGMNLKNFIEDSNWGFASVVGLSVAAAAVVTITNMRALRSVTKLTLLNNHTGANNKKHLANAKLALDKEIPTFWDRWLTSARVLWSGREVLYKDGSKRDMIWKWLVDDDKK.

A mitochondrion-targeting transit peptide spans 1–15; it reads MYFRFGKGLQIQLRH. Residues 308–328 traverse the membrane as a helical segment; the sequence is LLLFELKVTVYTLGFTVATLV. The YGMN motif lies at 332–335; that stretch reads YGMN. Residues 344 to 364 traverse the membrane as a helical segment; that stretch reads NWGFASVVGLSVAAAAVVTIT.

Belongs to the CorA metal ion transporter (MIT) (TC 1.A.35) family. In terms of assembly, homopentamer. Forms homooligomers. Interacts with MFM1.

The protein resides in the mitochondrion inner membrane. In terms of biological role, high-conductance magnesium-selective channel that mediates the influx of magnesium into the mitochondrial matrix. Essential for the splicing of mRNA group II introns in mitochondria by affecting mitochondrial magnesium concentrations, which are critical for group II intron splicing. It also suppresses a variety of mitochondrial intron mutations and its absence may disturb the assembly of mitochondrial membrane complexes. The sequence is that of Mitochondrial inner membrane magnesium transporter MRS2 (MRS2) from Kluyveromyces lactis (strain ATCC 8585 / CBS 2359 / DSM 70799 / NBRC 1267 / NRRL Y-1140 / WM37) (Yeast).